Reading from the N-terminus, the 348-residue chain is NADH-quinone oxidoreductase subunit H (348 aa).

9 consecutive transmembrane segments (helical) span residues Leu-13–Leu-33, Pro-50–Leu-70, Ala-82–Ile-102, Val-115–Gly-135, Ile-161–Val-181, Phe-198–Leu-218, Ala-258–Val-278, Trp-285–Leu-305, and Leu-321–Leu-341.

The protein belongs to the complex I subunit 1 family. As to quaternary structure, NDH-1 is composed of 14 different subunits. Subunits NuoA, H, J, K, L, M, N constitute the membrane sector of the complex.

It localises to the cell inner membrane. It catalyses the reaction a quinone + NADH + 5 H(+)(in) = a quinol + NAD(+) + 4 H(+)(out). In terms of biological role, NDH-1 shuttles electrons from NADH, via FMN and iron-sulfur (Fe-S) centers, to quinones in the respiratory chain. The immediate electron acceptor for the enzyme in this species is believed to be ubiquinone. Couples the redox reaction to proton translocation (for every two electrons transferred, four hydrogen ions are translocated across the cytoplasmic membrane), and thus conserves the redox energy in a proton gradient. This subunit may bind ubiquinone. The sequence is that of NADH-quinone oxidoreductase subunit H from Agrobacterium fabrum (strain C58 / ATCC 33970) (Agrobacterium tumefaciens (strain C58)).